We begin with the raw amino-acid sequence, 84 residues long: Limulin (84 aa).

Residues 6-84 enclose the Pentraxin (PTX) domain; the sequence is ITSKVKFPPS…DEQGDFLFNV (79 aa). 2 residues coordinate Ca(2+): aspartate 67 and asparagine 68.

Belongs to the pentraxin family. As to quaternary structure, homopentamer. Pentraxin (or pentaxin) have a discoid arrangement of 5 non-covalently bound subunits. Ca(2+) is required as a cofactor. A disulfide bond links Cys-38 to a Cys in the C-terminal half of the chain of 163 residues.

Its function is as follows. Lectin that binds sialic acid. Displays antiviral activity and therefore may contribute to defense against infections. This Limulus polyphemus (Atlantic horseshoe crab) protein is Limulin.